The primary structure comprises 516 residues: Gamma-aminobutyrate transaminase 1, mitochondrial (516 aa).

The N-terminal 47 residues, 1–47 (MVIARGLLRSNASSSSSQAINLLKYVTSTGSLQGHTQNLCDASTRHF), are a transit peptide targeting the mitochondrion. A compositionally biased stretch (polar residues) spans 45–60 (RHFSSVPSPQSNSTEE). Positions 45–64 (RHFSSVPSPQSNSTEENGFK) are disordered. Position 171-172 (171-172 (GS)) interacts with pyridoxal 5'-phosphate. Substrate is bound at residue Tyr-204. Pyridoxal 5'-phosphate is bound at residue Asp-311. Lys-340 serves as a coordination point for substrate. Residue Lys-340 is modified to N6-(pyridoxal phosphate)lysine.

Belongs to the class-III pyridoxal-phosphate-dependent aminotransferase family.

It localises to the mitochondrion. The enzyme catalyses 4-aminobutanoate + pyruvate = succinate semialdehyde + L-alanine. It catalyses the reaction 4-aminobutanoate + glyoxylate = succinate semialdehyde + glycine. Its function is as follows. Transaminase that degrades gamma-amino butyric acid (GABA) and uses pyruvate as amino-group acceptor, but not 2-oxoglutarate. This Oryza sativa subsp. indica (Rice) protein is Gamma-aminobutyrate transaminase 1, mitochondrial.